A 155-amino-acid polypeptide reads, in one-letter code: SsrA-binding protein (155 aa).

The protein belongs to the SmpB family.

It localises to the cytoplasm. Functionally, required for rescue of stalled ribosomes mediated by trans-translation. Binds to transfer-messenger RNA (tmRNA), required for stable association of tmRNA with ribosomes. tmRNA and SmpB together mimic tRNA shape, replacing the anticodon stem-loop with SmpB. tmRNA is encoded by the ssrA gene; the 2 termini fold to resemble tRNA(Ala) and it encodes a 'tag peptide', a short internal open reading frame. During trans-translation Ala-aminoacylated tmRNA acts like a tRNA, entering the A-site of stalled ribosomes, displacing the stalled mRNA. The ribosome then switches to translate the ORF on the tmRNA; the nascent peptide is terminated with the 'tag peptide' encoded by the tmRNA and targeted for degradation. The ribosome is freed to recommence translation, which seems to be the essential function of trans-translation. This is SsrA-binding protein from Geobacillus sp. (strain WCH70).